Consider the following 222-residue polypeptide: MQTFLYPRTWLILGLLLLGSGCAVTPKTITQVPNTARPAAPSQAVYNSGGIYSPATYRPLLEDKRARLVGDTIVINITENTSATKSGSNSASKSGAVNAGITGLFGHNVPKASFNAASDNAYDDAAASNSRNVFTGTISATVTEVLPNGHLVVSGEKQVAFDRGTEFVRFSGVVDPMYVAAGNSVPSSRVADARIEYRTNSNLDTAQVMSILTRFFLSFAPL.

The first 21 residues, 1–21 (MQTFLYPRTWLILGLLLLGSG), serve as a signal peptide directing secretion. Residue Cys-22 is the site of N-palmitoyl cysteine attachment. Residue Cys-22 is the site of S-diacylglycerol cysteine attachment.

Belongs to the FlgH family. In terms of assembly, the basal body constitutes a major portion of the flagellar organelle and consists of four rings (L,P,S, and M) mounted on a central rod.

It localises to the cell outer membrane. The protein resides in the bacterial flagellum basal body. Assembles around the rod to form the L-ring and probably protects the motor/basal body from shearing forces during rotation. This chain is Flagellar L-ring protein, found in Methylobacillus flagellatus (strain ATCC 51484 / DSM 6875 / VKM B-1610 / KT).